We begin with the raw amino-acid sequence, 249 residues long: 2,3-bisphosphoglycerate-dependent phosphoglycerate mutase (249 aa).

Residues 9-16, 22-23, R61, 88-91, K99, 115-116, and 184-185 each bind substrate; these read RHGESEWN, TG, ERHY, RR, and GN. Catalysis depends on H10, which acts as the Tele-phosphohistidine intermediate. Catalysis depends on E88, which acts as the Proton donor/acceptor.

This sequence belongs to the phosphoglycerate mutase family. BPG-dependent PGAM subfamily.

The catalysed reaction is (2R)-2-phosphoglycerate = (2R)-3-phosphoglycerate. Its pathway is carbohydrate degradation; glycolysis; pyruvate from D-glyceraldehyde 3-phosphate: step 3/5. In terms of biological role, catalyzes the interconversion of 2-phosphoglycerate and 3-phosphoglycerate. This chain is 2,3-bisphosphoglycerate-dependent phosphoglycerate mutase, found in Cutibacterium acnes (strain DSM 16379 / KPA171202) (Propionibacterium acnes).